A 929-amino-acid chain; its full sequence is ATP-dependent RNA helicase DDX42 (929 aa).

K5 carries the N6-acetyllysine modification. R12 bears the Omega-N-methylarginine mark. 2 disordered regions span residues 25–119 (KKEE…LEAF) and 182–203 (EYDS…LPPI). The span at 35 to 52 (SHSAFGAASSSSGFGKSA) shows a compositional bias: low complexity. S58 is subject to Phosphoserine. The span at 70-84 (DEENAYFEDEEEDSS) shows a compositional bias: acidic residues. A phosphoserine mark is found at S96, S104, S109, and S111. A coiled-coil region spans residues 116 to 157 (LEAFMAEVEDQAARDMKRLEEKDKERKNVKGIRDDIEEEDDQ). At S185 the chain carries Phosphoserine. The short motif at 253–281 (SSFAHFGFDEQLMHQIRKSEYTQPTPIQC) is the Q motif element. The Helicase ATP-binding domain maps to 284–459 (VPVALSGRDM…RDILIDPIRV (176 aa)). Residue 297–304 (AKTGSGKT) coordinates ATP. A DEAD box motif is present at residues 407 to 410 (DEAD). The 146-residue stretch at 487 to 632 (WLTRRLVEFT…HVSKELLDLA (146 aa)) folds into the Helicase C-terminal domain. Disordered stretches follow at residues 662 to 682 (ERPG…VMSN) and 723 to 929 (GTSS…RWDS). Residues 723 to 737 (GTSSAGASGWTSAGS) show a composition bias toward low complexity. 2 stretches are compositionally biased toward polar residues: residues 738–777 (LNSV…SSAP) and 787–798 (GVNNTASGNNSR). The interval 739-828 (NSVPTNSAQQ…RHSHGDGGNR (90 aa)) is necessary for interaction with TP53BP2. A compositionally biased stretch (basic and acidic residues) spans 821–911 (SHGDGGNRHG…KVDSKTDKTP (91 aa)). K894 participates in a covalent cross-link: Glycyl lysine isopeptide (Lys-Gly) (interchain with G-Cter in SUMO2).

It belongs to the DEAD box helicase family. DDX42 subfamily. In terms of assembly, transient component of the SF3B subcomplex of the 17S U2 SnRNP complex. Interacts (via the C-terminus) with TP53BP2; the interaction is not inhibitied by TP53BP2 ubiquitination and is independent of p53/TP53.

It localises to the cytoplasm. Its subcellular location is the nucleus. It catalyses the reaction ATP + H2O = ADP + phosphate + H(+). Its function is as follows. ATP-dependent RNA helicase that binds to partially double-stranded RNAs (dsRNAs) in order to unwind RNA secondary structures. Unwinding is promoted in the presence of single-strand binding proteins. Also mediates RNA duplex formation thereby displacing the single-strand RNA binding protein. ATP and ADP modulate its activity: ATP binding and hydrolysis by DDX42 triggers RNA strand separation, whereas the ADP-bound form of the protein triggers annealing of complementary RNA strands. Required for assembly of the 17S U2 SnRNP complex of the spliceosome, a large ribonucleoprotein complex that removes introns from transcribed pre-mRNAs: DDX42 associates transiently with the SF3B subcomplex of the 17S U2 SnRNP complex and is released after fulfilling its role in the assembly of 17S U2 SnRNP. Involved in the survival of cells by interacting with TP53BP2 and thereby counteracting the apoptosis-stimulating activity of TP53BP2. Relocalizes TP53BP2 to the cytoplasm. This chain is ATP-dependent RNA helicase DDX42 (Ddx42), found in Mus musculus (Mouse).